A 95-amino-acid chain; its full sequence is Aspartyl/glutamyl-tRNA(Asn/Gln) amidotransferase subunit C (95 aa).

The protein belongs to the GatC family. As to quaternary structure, heterotrimer of A, B and C subunits.

It carries out the reaction L-glutamyl-tRNA(Gln) + L-glutamine + ATP + H2O = L-glutaminyl-tRNA(Gln) + L-glutamate + ADP + phosphate + H(+). The catalysed reaction is L-aspartyl-tRNA(Asn) + L-glutamine + ATP + H2O = L-asparaginyl-tRNA(Asn) + L-glutamate + ADP + phosphate + 2 H(+). Its function is as follows. Allows the formation of correctly charged Asn-tRNA(Asn) or Gln-tRNA(Gln) through the transamidation of misacylated Asp-tRNA(Asn) or Glu-tRNA(Gln) in organisms which lack either or both of asparaginyl-tRNA or glutaminyl-tRNA synthetases. The reaction takes place in the presence of glutamine and ATP through an activated phospho-Asp-tRNA(Asn) or phospho-Glu-tRNA(Gln). This chain is Aspartyl/glutamyl-tRNA(Asn/Gln) amidotransferase subunit C, found in Rhizorhabdus wittichii (strain DSM 6014 / CCUG 31198 / JCM 15750 / NBRC 105917 / EY 4224 / RW1) (Sphingomonas wittichii).